The sequence spans 411 residues: ATP phosphoribosyltransferase 1, chloroplastic (411 aa).

Residues 1-12 (MSLLLPTNLQQY) show a composition bias toward polar residues. The interval 1 to 27 (MSLLLPTNLQQYPSSSSFPSSTPILSP) is disordered. The N-terminal 49 residues, 1-49 (MSLLLPTNLQQYPSSSSFPSSTPILSPPPSTAFSVIVPRRRCLRLVTSC), are a transit peptide targeting the chloroplast. The segment covering 13-24 (PSSSSFPSSTPI) has biased composition (low complexity). Val50 is subject to N-acetylvaline.

This sequence belongs to the ATP phosphoribosyltransferase family. Long subfamily. Requires Mg(2+) as cofactor. As to expression, expressed in leaves and at lower levels in roots (at protein level).

Its subcellular location is the plastid. It localises to the chloroplast. The enzyme catalyses 1-(5-phospho-beta-D-ribosyl)-ATP + diphosphate = 5-phospho-alpha-D-ribose 1-diphosphate + ATP. It participates in amino-acid biosynthesis; L-histidine biosynthesis; L-histidine from 5-phospho-alpha-D-ribose 1-diphosphate: step 1/9. Feedback inhibited by L-histidine. Catalyzes the condensation of ATP and 5-phosphoribose 1-diphosphate to form N'-(5'-phosphoribosyl)-ATP (PR-ATP). The sequence is that of ATP phosphoribosyltransferase 1, chloroplastic (HISN1A) from Arabidopsis thaliana (Mouse-ear cress).